Consider the following 219-residue polypeptide: Ribose-5-phosphate isomerase A (219 aa).

Residues 28–31 (TGST), 81–84 (DGAD), and 94–97 (KGGG) each bind substrate. Glutamate 103 (proton acceptor) is an active-site residue. A substrate-binding site is contributed by lysine 121.

This sequence belongs to the ribose 5-phosphate isomerase family. As to quaternary structure, homodimer.

The catalysed reaction is aldehydo-D-ribose 5-phosphate = D-ribulose 5-phosphate. It participates in carbohydrate degradation; pentose phosphate pathway; D-ribose 5-phosphate from D-ribulose 5-phosphate (non-oxidative stage): step 1/1. In terms of biological role, catalyzes the reversible conversion of ribose-5-phosphate to ribulose 5-phosphate. In Shewanella sp. (strain MR-4), this protein is Ribose-5-phosphate isomerase A.